The primary structure comprises 474 residues: Calcitonin receptor (474 aa).

The N-terminal stretch at 1 to 24 (MRFTFTSRCLALFLLLNHPTPILP) is a signal peptide. Residues 25 to 146 (AFSNQTYPTI…FTPEKLKNAY (122 aa)) are Extracellular-facing. N28, N73, N125, and N130 each carry an N-linked (GlcNAc...) asparagine glycan. 3 disulfides stabilise this stretch: C55–C81, C72–C112, and C95–C134. Residues 147 to 169 (VLYYLAIVGHSLSIFTLVISLGI) form a helical membrane-spanning segment. At 170–181 (FVFFRSLGCQRV) the chain is on the cytoplasmic side. A helical transmembrane segment spans residues 182-202 (TLHKNMFLTYILNSMIIIIHL). The Extracellular portion of the chain corresponds to 203–219 (VEVVPNGELVRRDPVSC). A disulfide bridge links C219 with C289. Residues 220–242 (KILHFFHQYMMACNYFWMLCEGI) traverse the membrane as a helical segment. Over 243–259 (YLHTLIVVAVFTEKQRL) the chain is Cytoplasmic. A helical transmembrane segment spans residues 260–280 (RWYYLLGWGFPLVPTTIHAIT). At 281-296 (RAVYFNDNCWLSVETH) the chain is on the extracellular side. A helical membrane pass occupies residues 297–320 (LLYIIHGPVMAALVVNFFFLLNIV). At 321 to 340 (RVLVTKMRETHEAESHMYLK) the chain is on the cytoplasmic side. Residues 341–359 (AVKATMILVPLLGIQFVVF) form a helical membrane-spanning segment. The Extracellular segment spans residues 360–367 (PWRPSNKM). A helical transmembrane segment spans residues 368–394 (LGKIYDYVMHSLIHFQGFFVATIYCFC). The Cytoplasmic segment spans residues 395–474 (NNEVQTTVKR…LNIIEQESSA (80 aa)).

Belongs to the G-protein coupled receptor 2 family. As to quaternary structure, heterodimer of CALCR and RAMP1, RAMP2 or RAMP3; the receptor complexes function as AMYR1, AMYR2 and AMYR3 receptors, respectively, and respond to amylin/IAPP, calcitonin/CT and CGRP1 ligands. Interacts with GPRASP2.

It localises to the cell membrane. With respect to regulation, sensitive to cholera toxin. G protein-coupled receptor activated by ligand peptides amylin (IAPP), calcitonin (CT/CALCA) and calcitonin gene-related peptide type 1 (CGRP1/CALCA). CALCR interacts with receptor-activity-modifying proteins RAMP1, 2 and 3 to form receptor complexes AMYR1, 2 and 3, respectively. IAPP, CT and CGRP1 activate CALCR and AMYRs with distinct modes of receptor activation resulting in specific phenotypes. Ligand binding causes a conformation change that triggers signaling via guanine nucleotide-binding proteins (G proteins) and modulates the activity of downstream effectors. Activates cAMP-dependent pathway. Its function is as follows. Non-functional protein. Unable to couple to G proteins and activate adenylyl cyclase. Does not undergo receptor internalization following ligand binding. This is Calcitonin receptor from Homo sapiens (Human).